Reading from the N-terminus, the 291-residue chain is N-acetylmannosamine kinase (291 aa).

Residues 5–12 and 132–139 contribute to the ATP site; these read AIDIGGTK and GVGGGVVC. His-156, Cys-166, Cys-168, and Cys-173 together coordinate Zn(2+).

Belongs to the ROK (NagC/XylR) family. NanK subfamily. Homodimer.

It carries out the reaction an N-acyl-D-mannosamine + ATP = an N-acyl-D-mannosamine 6-phosphate + ADP + H(+). Its pathway is amino-sugar metabolism; N-acetylneuraminate degradation; D-fructose 6-phosphate from N-acetylneuraminate: step 2/5. Catalyzes the phosphorylation of N-acetylmannosamine (ManNAc) to ManNAc-6-P. This is N-acetylmannosamine kinase from Salmonella heidelberg (strain SL476).